The primary structure comprises 235 residues: Lipoprotein-releasing system ATP-binding protein LolD (235 aa).

The region spanning 7–234 (LQCTNLSKRY…QQELTLMGAR (228 aa)) is the ABC transporter domain. 43–50 (GSSGSGKS) provides a ligand contact to ATP.

Belongs to the ABC transporter superfamily. Lipoprotein translocase (TC 3.A.1.125) family. The complex is composed of two ATP-binding proteins (LolD) and two transmembrane proteins (LolC and LolE).

It localises to the cell inner membrane. Its function is as follows. Part of the ABC transporter complex LolCDE involved in the translocation of mature outer membrane-directed lipoproteins, from the inner membrane to the periplasmic chaperone, LolA. Responsible for the formation of the LolA-lipoprotein complex in an ATP-dependent manner. The polypeptide is Lipoprotein-releasing system ATP-binding protein LolD (Pectobacterium atrosepticum (strain SCRI 1043 / ATCC BAA-672) (Erwinia carotovora subsp. atroseptica)).